The primary structure comprises 734 residues: Photosystem I P700 chlorophyll a apoprotein A2 (734 aa).

A run of 8 helical transmembrane segments spans residues 46–69, 135–158, 175–199, 273–291, 330–353, 369–395, 417–439, and 517–535; these read IFASHFGQLAIIFLWTSGNLFHVA, LYTGALFLLFLSTLSLVAGWLHLQ, LNHHLSGLFGVSSLAWTGHLVHVAI, IAHHHLAIAFIFLIAGHMY, IHFQLGLALASLGVITSLVAQHMY, AALYTHHQYIAGFIMTGAFAHGAIFFI, AIISHLSWASLFLGFHTLGLYVH, and FLVHHAIALGLHTTTLILV. [4Fe-4S] cluster is bound by residues C559 and C568. 2 helical membrane-spanning segments follow: residues 575-596 and 643-665; these read AFYLAVFWMLNTIGWVTFYWHW and LSVWAWMFLFGHLVWATGFMFLI. Chlorophyll a is bound by residues H654, M662, and Y670. W671 is a phylloquinone binding site. Residues 707–727 form a helical membrane-spanning segment; sequence LVGLAHFSVGYIFTYAAFLIA.

Belongs to the PsaA/PsaB family. In terms of assembly, the PsaA/B heterodimer binds the P700 chlorophyll special pair and subsequent electron acceptors. PSI consists of a core antenna complex that captures photons, and an electron transfer chain that converts photonic excitation into a charge separation. The eukaryotic PSI reaction center is composed of at least 11 subunits. Requires P700 is a chlorophyll a/chlorophyll a' dimer, A0 is one or more chlorophyll a, A1 is one or both phylloquinones and FX is a shared 4Fe-4S iron-sulfur center. as cofactor.

Its subcellular location is the plastid. The protein localises to the chloroplast thylakoid membrane. The enzyme catalyses reduced [plastocyanin] + hnu + oxidized [2Fe-2S]-[ferredoxin] = oxidized [plastocyanin] + reduced [2Fe-2S]-[ferredoxin]. Functionally, psaA and PsaB bind P700, the primary electron donor of photosystem I (PSI), as well as the electron acceptors A0, A1 and FX. PSI is a plastocyanin-ferredoxin oxidoreductase, converting photonic excitation into a charge separation, which transfers an electron from the donor P700 chlorophyll pair to the spectroscopically characterized acceptors A0, A1, FX, FA and FB in turn. Oxidized P700 is reduced on the lumenal side of the thylakoid membrane by plastocyanin. This chain is Photosystem I P700 chlorophyll a apoprotein A2, found in Agrostis stolonifera (Creeping bentgrass).